A 156-amino-acid polypeptide reads, in one-letter code: Endoribonuclease YbeY (156 aa).

Zn(2+)-binding residues include H117, H121, and H127.

Belongs to the endoribonuclease YbeY family. It depends on Zn(2+) as a cofactor.

Its subcellular location is the cytoplasm. Functionally, single strand-specific metallo-endoribonuclease involved in late-stage 70S ribosome quality control and in maturation of the 3' terminus of the 16S rRNA. This chain is Endoribonuclease YbeY, found in Shewanella piezotolerans (strain WP3 / JCM 13877).